A 270-amino-acid polypeptide reads, in one-letter code: Aliphatic sulfonates import ATP-binding protein SsuB 3 (270 aa).

An ABC transporter domain is found at 17-238 (LAVRNLKKAF…VRGSHRLAAL (222 aa)). 49 to 56 (GRSGCGKS) provides a ligand contact to ATP.

It belongs to the ABC transporter superfamily. Aliphatic sulfonates importer (TC 3.A.1.17.2) family. As to quaternary structure, the complex is composed of two ATP-binding proteins (SsuB), two transmembrane proteins (SsuC) and a solute-binding protein (SsuA).

The protein localises to the cell inner membrane. It catalyses the reaction ATP + H2O + aliphatic sulfonate-[sulfonate-binding protein]Side 1 = ADP + phosphate + aliphatic sulfonateSide 2 + [sulfonate-binding protein]Side 1.. Its function is as follows. Part of the ABC transporter complex SsuABC involved in aliphatic sulfonates import. Responsible for energy coupling to the transport system. The sequence is that of Aliphatic sulfonates import ATP-binding protein SsuB 3 from Pseudomonas savastanoi pv. phaseolicola (strain 1448A / Race 6) (Pseudomonas syringae pv. phaseolicola (strain 1448A / Race 6)).